Here is a 1222-residue protein sequence, read N- to C-terminus: ATP-dependent helicase/nuclease subunit A (1222 aa).

Residues 39 to 495 (QKRTAQQIEA…ILLKENFRSQ (457 aa)) enclose the UvrD-like helicase ATP-binding domain. 60-67 (ASAGSGKT) contributes to the ATP binding site. In terms of domain architecture, UvrD-like helicase C-terminal spans 524 to 810 (QLIAGSHAQT…NLMTIHKSKG (287 aa)).

It belongs to the helicase family. AddA subfamily. Heterodimer of AddA and AddB/RexB. Mg(2+) serves as cofactor.

It carries out the reaction Couples ATP hydrolysis with the unwinding of duplex DNA by translocating in the 3'-5' direction.. The enzyme catalyses ATP + H2O = ADP + phosphate + H(+). Its function is as follows. The heterodimer acts as both an ATP-dependent DNA helicase and an ATP-dependent, dual-direction single-stranded exonuclease. Recognizes the chi site generating a DNA molecule suitable for the initiation of homologous recombination. The AddA nuclease domain is required for chi fragment generation; this subunit has the helicase and 3' -&gt; 5' nuclease activities. This chain is ATP-dependent helicase/nuclease subunit A, found in Streptococcus pyogenes serotype M28 (strain MGAS6180).